The following is a 160-amino-acid chain: RNA pyrophosphohydrolase (160 aa).

The Nudix hydrolase domain occupies P10–D154. The Nudix box motif lies at G44–G65.

This sequence belongs to the Nudix hydrolase family. RppH subfamily. A divalent metal cation is required as a cofactor.

Its function is as follows. Accelerates the degradation of transcripts by removing pyrophosphate from the 5'-end of triphosphorylated RNA, leading to a more labile monophosphorylated state that can stimulate subsequent ribonuclease cleavage. The polypeptide is RNA pyrophosphohydrolase (Dinoroseobacter shibae (strain DSM 16493 / NCIMB 14021 / DFL 12)).